Here is a 251-residue protein sequence, read N- to C-terminus: tRNA (guanine-N(1)-)-methyltransferase (251 aa).

S-adenosyl-L-methionine is bound by residues Gly-113 and 133-138 (IGDYVL).

This sequence belongs to the RNA methyltransferase TrmD family. As to quaternary structure, homodimer.

The protein resides in the cytoplasm. It catalyses the reaction guanosine(37) in tRNA + S-adenosyl-L-methionine = N(1)-methylguanosine(37) in tRNA + S-adenosyl-L-homocysteine + H(+). In terms of biological role, specifically methylates guanosine-37 in various tRNAs. In Pectobacterium atrosepticum (strain SCRI 1043 / ATCC BAA-672) (Erwinia carotovora subsp. atroseptica), this protein is tRNA (guanine-N(1)-)-methyltransferase.